We begin with the raw amino-acid sequence, 173 residues long: Small ribosomal subunit protein uS5 (173 aa).

The S5 DRBM domain maps to 17-80 (WQERVIQIRR…ADGKKQLIDV (64 aa)).

This sequence belongs to the universal ribosomal protein uS5 family. In terms of assembly, part of the 30S ribosomal subunit. Contacts proteins S4 and S8.

Functionally, with S4 and S12 plays an important role in translational accuracy. Located at the back of the 30S subunit body where it stabilizes the conformation of the head with respect to the body. The polypeptide is Small ribosomal subunit protein uS5 (Rippkaea orientalis (strain PCC 8801 / RF-1) (Cyanothece sp. (strain PCC 8801))).